A 448-amino-acid chain; its full sequence is Phosphoglucosamine mutase (448 aa).

Residue Ser100 is the Phosphoserine intermediate of the active site. Ser100, Asp240, Asp242, and Asp244 together coordinate Mg(2+). At Ser100 the chain carries Phosphoserine.

The protein belongs to the phosphohexose mutase family. Mg(2+) serves as cofactor. Post-translationally, activated by phosphorylation.

The enzyme catalyses alpha-D-glucosamine 1-phosphate = D-glucosamine 6-phosphate. Its function is as follows. Catalyzes the conversion of glucosamine-6-phosphate to glucosamine-1-phosphate. The sequence is that of Phosphoglucosamine mutase from Bacillus anthracis (strain A0248).